The following is a 274-amino-acid chain: tRNA-cytidine(32) 2-sulfurtransferase (274 aa).

The PP-loop motif motif lies at 40-45 (SGGKDS). Cysteine 115, cysteine 118, and cysteine 206 together coordinate [4Fe-4S] cluster.

It belongs to the TtcA family. In terms of assembly, homodimer. Requires Mg(2+) as cofactor. [4Fe-4S] cluster serves as cofactor.

The protein resides in the cytoplasm. It catalyses the reaction cytidine(32) in tRNA + S-sulfanyl-L-cysteinyl-[cysteine desulfurase] + AH2 + ATP = 2-thiocytidine(32) in tRNA + L-cysteinyl-[cysteine desulfurase] + A + AMP + diphosphate + H(+). The protein operates within tRNA modification. Catalyzes the ATP-dependent 2-thiolation of cytidine in position 32 of tRNA, to form 2-thiocytidine (s(2)C32). The sulfur atoms are provided by the cysteine/cysteine desulfurase (IscS) system. The protein is tRNA-cytidine(32) 2-sulfurtransferase of Azotobacter vinelandii (strain DJ / ATCC BAA-1303).